Consider the following 329-residue polypeptide: Transaldolase (329 aa).

The Schiff-base intermediate with substrate role is filled by Lys136.

It belongs to the transaldolase family. Type 1 subfamily. Homodimer.

The protein localises to the cytoplasm. The catalysed reaction is D-sedoheptulose 7-phosphate + D-glyceraldehyde 3-phosphate = D-erythrose 4-phosphate + beta-D-fructose 6-phosphate. The protein operates within carbohydrate degradation; pentose phosphate pathway; D-glyceraldehyde 3-phosphate and beta-D-fructose 6-phosphate from D-ribose 5-phosphate and D-xylulose 5-phosphate (non-oxidative stage): step 2/3. Transaldolase is important for the balance of metabolites in the pentose-phosphate pathway. The polypeptide is Transaldolase (Methylococcus capsulatus (strain ATCC 33009 / NCIMB 11132 / Bath)).